The sequence spans 67 residues: MARITVEDCLQKIPNRFQLVLAATYRARMLSQGHAPKVETKNKPGVTALREIAAGAVGIEMLRKVPG.

The protein belongs to the RNA polymerase subunit omega family. As to quaternary structure, the RNAP catalytic core consists of 2 alpha, 1 beta, 1 beta' and 1 omega subunit. When a sigma factor is associated with the core the holoenzyme is formed, which can initiate transcription.

It catalyses the reaction RNA(n) + a ribonucleoside 5'-triphosphate = RNA(n+1) + diphosphate. In terms of biological role, promotes RNA polymerase assembly. Latches the N- and C-terminal regions of the beta' subunit thereby facilitating its interaction with the beta and alpha subunits. This is DNA-directed RNA polymerase subunit omega from Leptothrix cholodnii (strain ATCC 51168 / LMG 8142 / SP-6) (Leptothrix discophora (strain SP-6)).